Reading from the N-terminus, the 305-residue chain is UDP-3-O-acyl-N-acetylglucosamine deacetylase (305 aa).

Residues histidine 78, histidine 237, and aspartate 241 each coordinate Zn(2+). Histidine 264 (proton donor) is an active-site residue.

This sequence belongs to the LpxC family. Zn(2+) serves as cofactor.

It carries out the reaction a UDP-3-O-[(3R)-3-hydroxyacyl]-N-acetyl-alpha-D-glucosamine + H2O = a UDP-3-O-[(3R)-3-hydroxyacyl]-alpha-D-glucosamine + acetate. The protein operates within glycolipid biosynthesis; lipid IV(A) biosynthesis; lipid IV(A) from (3R)-3-hydroxytetradecanoyl-[acyl-carrier-protein] and UDP-N-acetyl-alpha-D-glucosamine: step 2/6. Its function is as follows. Catalyzes the hydrolysis of UDP-3-O-myristoyl-N-acetylglucosamine to form UDP-3-O-myristoylglucosamine and acetate, the committed step in lipid A biosynthesis. This Burkholderia cenocepacia (strain ATCC BAA-245 / DSM 16553 / LMG 16656 / NCTC 13227 / J2315 / CF5610) (Burkholderia cepacia (strain J2315)) protein is UDP-3-O-acyl-N-acetylglucosamine deacetylase.